We begin with the raw amino-acid sequence, 349 residues long: MITIAVDCMGGDHGPRVTLPACRHFLDRHADAQLLLVGRPESLGAFSHQRAKTVAASEVVSMDDPLEVALRRKKDSSMRVAIQQVKDGAAQAAVSAGNTAALMAISRYLLKTLDGIDRPAIAGQIPNAKGEATTVLDMGANVDCSAEHLLQFAMMGSALVSVLNGKDSPSVGLLNIGEEAIKGNEVIKKAGELLRSASKAGDLNFYGNVEGNDIFKGTADIVVCDGFVGNVALKASEGLATMIVDFLKMEFSRSIFTKFAAIAAYPIISALKKRMDHRRYNGGALLGLRGLVFKSHGSADELAFEYALTRAYDAARNNLLDRVQARIAHAAPLWGASGRSVPSGAAVPV.

This sequence belongs to the PlsX family. Homodimer. Probably interacts with PlsY.

Its subcellular location is the cytoplasm. It catalyses the reaction a fatty acyl-[ACP] + phosphate = an acyl phosphate + holo-[ACP]. The protein operates within lipid metabolism; phospholipid metabolism. Its function is as follows. Catalyzes the reversible formation of acyl-phosphate (acyl-PO(4)) from acyl-[acyl-carrier-protein] (acyl-ACP). This enzyme utilizes acyl-ACP as fatty acyl donor, but not acyl-CoA. In Albidiferax ferrireducens (strain ATCC BAA-621 / DSM 15236 / T118) (Rhodoferax ferrireducens), this protein is Phosphate acyltransferase.